The sequence spans 221 residues: Telomere repeats-binding bouquet formation protein 2 (221 aa).

It belongs to the TERB2 family. As to quaternary structure, component of the MAJIN-TERB1-TERB2 complex, composed of MAJIN, TERB1 and TERB2.

Its subcellular location is the chromosome. It localises to the telomere. It is found in the nucleus inner membrane. Meiosis-specific telomere-associated protein involved in meiotic telomere attachment to the nucleus inner membrane, a crucial step for homologous pairing and synapsis. Component of the MAJIN-TERB1-TERB2 complex, which promotes telomere cap exchange by mediating attachment of telomeric DNA to the inner nuclear membrane and replacement of the protective cap of telomeric chromosomes: in early meiosis, the MAJIN-TERB1-TERB2 complex associates with telomeric DNA and the shelterin/telosome complex. During prophase, the complex matures and promotes release of the shelterin/telosome complex from telomeric DNA. The protein is Telomere repeats-binding bouquet formation protein 2 of Bos taurus (Bovine).